The primary structure comprises 257 residues: Acyl-[acyl-carrier-protein]--UDP-N-acetylglucosamine O-acyltransferase (257 aa).

It belongs to the transferase hexapeptide repeat family. LpxA subfamily. Homotrimer.

It is found in the cytoplasm. The catalysed reaction is a (3R)-hydroxyacyl-[ACP] + UDP-N-acetyl-alpha-D-glucosamine = a UDP-3-O-[(3R)-3-hydroxyacyl]-N-acetyl-alpha-D-glucosamine + holo-[ACP]. It functions in the pathway glycolipid biosynthesis; lipid IV(A) biosynthesis; lipid IV(A) from (3R)-3-hydroxytetradecanoyl-[acyl-carrier-protein] and UDP-N-acetyl-alpha-D-glucosamine: step 1/6. Its function is as follows. Involved in the biosynthesis of lipid A, a phosphorylated glycolipid that anchors the lipopolysaccharide to the outer membrane of the cell. In Anaeromyxobacter sp. (strain K), this protein is Acyl-[acyl-carrier-protein]--UDP-N-acetylglucosamine O-acyltransferase.